A 624-amino-acid chain; its full sequence is Actin-related protein 8 (624 aa).

Position 1 is an N-acetylmethionine (M1). Over residues 1 to 25 the composition is skewed to basic and acidic residues; the sequence is MTQAEKGDTENGKEKGGEKEKEQRG. Residues 1 to 29 are disordered; it reads MTQAEKGDTENGKEKGGEKEKEQRGVKRP. S55 and T56 together coordinate ATP. S132 is subject to Phosphoserine. Position 283-286 (283-286) interacts with ATP; the sequence is DVGD. S412 bears the Phosphoserine mark. The segment at 430 to 462 is disordered; that stretch reads SKQEQSAKATADRKSASKPIGFEGDLRGQSSDL.

It belongs to the actin family. ARP8 subfamily. Component of the chromatin remodeling INO80 complex; specifically part of a complex module associated with the DBINO domain of INO80. Exists as monomers and dimers, but the dimer is most probably the biologically relevant form required for stable interactions with histones that exploits the twofold symmetry of the nucleosome core.

The protein resides in the nucleus. It localises to the chromosome. Plays an important role in the functional organization of mitotic chromosomes. Exhibits low basal ATPase activity, and unable to polymerize. In terms of biological role, proposed core component of the chromatin remodeling INO80 complex which is involved in transcriptional regulation, DNA replication and probably DNA repair. Required for the recruitment of INO80 (and probably the INO80 complex) to sites of DNA damage Strongly prefer nucleosomes and H3-H4 tetramers over H2A-H2B dimers, suggesting it may act as a nucleosome recognition module within the complex. This is Actin-related protein 8 (ACTR8) from Pongo abelii (Sumatran orangutan).